The chain runs to 435 residues: Trigger factor (435 aa).

One can recognise a PPIase FKBP-type domain in the interval 183 to 263; it reads GDFINVDVTI…VKTIWQGNMP (81 aa).

Belongs to the FKBP-type PPIase family. Tig subfamily.

It localises to the cytoplasm. The enzyme catalyses [protein]-peptidylproline (omega=180) = [protein]-peptidylproline (omega=0). Its function is as follows. Involved in protein export. Acts as a chaperone by maintaining the newly synthesized protein in an open conformation. Functions as a peptidyl-prolyl cis-trans isomerase. The sequence is that of Trigger factor from Protochlamydia amoebophila (strain UWE25).